The primary structure comprises 266 residues: Glutamate racemase (266 aa).

Residues 9-10 (DS) and 41-42 (YG) each bind substrate. C73 functions as the Proton donor/acceptor in the catalytic mechanism. Residue 74 to 75 (NS) participates in substrate binding. The Proton donor/acceptor role is filled by C183. Substrate is bound at residue 184–185 (TH).

This sequence belongs to the aspartate/glutamate racemases family.

The enzyme catalyses L-glutamate = D-glutamate. It participates in cell wall biogenesis; peptidoglycan biosynthesis. Its function is as follows. Provides the (R)-glutamate required for cell wall biosynthesis. The sequence is that of Glutamate racemase from Shewanella loihica (strain ATCC BAA-1088 / PV-4).